Reading from the N-terminus, the 234-residue chain is 2-phospho-L-lactate guanylyltransferase (234 aa).

This sequence belongs to the CofC family. In terms of assembly, homodimer.

The catalysed reaction is (2S)-2-phospholactate + GTP + H(+) = (2S)-lactyl-2-diphospho-5'-guanosine + diphosphate. Its pathway is cofactor biosynthesis; coenzyme F420 biosynthesis. In terms of biological role, guanylyltransferase that catalyzes the activation of (2S)-2-phospholactate (2-PL) as (2S)-lactyl-2-diphospho-5'-guanosine, via the condensation of 2-PL with GTP. It is involved in the biosynthesis of coenzyme F420, a hydride carrier cofactor. This chain is 2-phospho-L-lactate guanylyltransferase, found in Methanobrevibacter ruminantium (strain ATCC 35063 / DSM 1093 / JCM 13430 / OCM 146 / M1) (Methanobacterium ruminantium).